We begin with the raw amino-acid sequence, 222 residues long: UPF0758 protein HSM_0009 (222 aa).

An MPN domain is found at 99-222; it reads QEFTSPDTVR…YFSFAEQGWI (124 aa). Zn(2+) is bound by residues H171, H173, and D184. The JAMM motif signature appears at 171–184; that stretch reads HNHPSGVSTPSMAD.

This sequence belongs to the UPF0758 family.

This Histophilus somni (strain 2336) (Haemophilus somnus) protein is UPF0758 protein HSM_0009.